Reading from the N-terminus, the 125-residue chain is Prefoldin subunit beta (125 aa).

The protein belongs to the prefoldin subunit beta family. As to quaternary structure, heterohexamer of two alpha and four beta subunits.

It is found in the cytoplasm. In terms of biological role, molecular chaperone capable of stabilizing a range of proteins. Seems to fulfill an ATP-independent, HSP70-like function in archaeal de novo protein folding. This chain is Prefoldin subunit beta, found in Pyrobaculum calidifontis (strain DSM 21063 / JCM 11548 / VA1).